The following is a 231-amino-acid chain: NADH-ubiquinone oxidoreductase chain 4 (231 aa).

The next 6 helical transmembrane spans lie at 1-21, 34-54, 63-85, 89-111, 128-148, and 156-176; these read PIAG…YGII, MFLP…LTCL, IAYS…TPWG, AMAL…NTTY, ILPM…ATPP, and LLIM…LGLS.

It belongs to the complex I subunit 4 family.

It is found in the mitochondrion membrane. The catalysed reaction is a ubiquinone + NADH + 5 H(+)(in) = a ubiquinol + NAD(+) + 4 H(+)(out). In terms of biological role, core subunit of the mitochondrial membrane respiratory chain NADH dehydrogenase (Complex I) that is believed to belong to the minimal assembly required for catalysis. Complex I functions in the transfer of electrons from NADH to the respiratory chain. The immediate electron acceptor for the enzyme is believed to be ubiquinone. This Trimeresurus stejnegeri (Chinese green tree viper) protein is NADH-ubiquinone oxidoreductase chain 4 (MT-ND4).